A 219-amino-acid polypeptide reads, in one-letter code: Uracil-DNA glycosylase (219 aa).

Residue Asp61 is the Proton acceptor of the active site.

Belongs to the uracil-DNA glycosylase (UDG) superfamily. UNG family.

Its subcellular location is the cytoplasm. The catalysed reaction is Hydrolyzes single-stranded DNA or mismatched double-stranded DNA and polynucleotides, releasing free uracil.. In terms of biological role, excises uracil residues from the DNA which can arise as a result of misincorporation of dUMP residues by DNA polymerase or due to deamination of cytosine. In Neisseria meningitidis serogroup A / serotype 4A (strain DSM 15465 / Z2491), this protein is Uracil-DNA glycosylase.